The primary structure comprises 464 residues: MDYLPLFHKLQGGRVLVVGGGEIALRKARLLADAGAALRVVAPEVDGQLAALAREGGGEVLVRGYQAADLVGCRLVIAATDDPGLNAQVSADAQALCVPVNVVDAPALCTVIFPAIVDRSPLVVAVSSGGDAPVLARLIRAKLETWIPSTYGELAALAARFRHKVKSLYPDVNQRRGFWETVFQGPIAERQLAGQGAEAERLLQAMVDGAPVQQGGEVYLVGAGPGDPDLLTFRALRLMQQADVVLYDRLVAPAIIEMCRRDAERIYVGKRRAEHAVPQDQINRLLVDLAREGKRVLRLKGGDPFIFGRGGEEIEELAEHGIPFQVVPGITAASGCSAYGGIPLTHRDYAQSVRFVTGHLKDGTSNLPWNDLVAPNQTLVFYMGLVGLPTICAELIRHGRASSTPAALVQQGTTRNQRVFTGTLADLPALVAQHEVHAPTLVIVGEVVQLREKLAWFEGSQQDQ.

Residues 1-203 (MDYLPLFHKL…GQGAEAERLL (203 aa)) form a precorrin-2 dehydrogenase /sirohydrochlorin ferrochelatase region. NAD(+) contacts are provided by residues 22–23 (EI) and 43–44 (PE). Ser128 is modified (phosphoserine). The uroporphyrinogen-III C-methyltransferase stretch occupies residues 216 to 464 (GEVYLVGAGP…AWFEGSQQDQ (249 aa)). Pro225 provides a ligand contact to S-adenosyl-L-methionine. Asp248 (proton acceptor) is an active-site residue. Lys270 (proton donor) is an active-site residue. S-adenosyl-L-methionine is bound by residues 301–303 (GGD), Ile306, 331–332 (TA), Met383, and Gly412.

The protein in the N-terminal section; belongs to the precorrin-2 dehydrogenase / sirohydrochlorin ferrochelatase family. In the C-terminal section; belongs to the precorrin methyltransferase family.

It carries out the reaction uroporphyrinogen III + 2 S-adenosyl-L-methionine = precorrin-2 + 2 S-adenosyl-L-homocysteine + H(+). The catalysed reaction is precorrin-2 + NAD(+) = sirohydrochlorin + NADH + 2 H(+). The enzyme catalyses siroheme + 2 H(+) = sirohydrochlorin + Fe(2+). The protein operates within cofactor biosynthesis; adenosylcobalamin biosynthesis; precorrin-2 from uroporphyrinogen III: step 1/1. It functions in the pathway cofactor biosynthesis; adenosylcobalamin biosynthesis; sirohydrochlorin from precorrin-2: step 1/1. Its pathway is porphyrin-containing compound metabolism; siroheme biosynthesis; precorrin-2 from uroporphyrinogen III: step 1/1. It participates in porphyrin-containing compound metabolism; siroheme biosynthesis; siroheme from sirohydrochlorin: step 1/1. The protein operates within porphyrin-containing compound metabolism; siroheme biosynthesis; sirohydrochlorin from precorrin-2: step 1/1. Functionally, multifunctional enzyme that catalyzes the SAM-dependent methylations of uroporphyrinogen III at position C-2 and C-7 to form precorrin-2 via precorrin-1. Then it catalyzes the NAD-dependent ring dehydrogenation of precorrin-2 to yield sirohydrochlorin. Finally, it catalyzes the ferrochelation of sirohydrochlorin to yield siroheme. This chain is Siroheme synthase, found in Pseudomonas putida (strain W619).